A 237-amino-acid chain; its full sequence is Purine nucleoside phosphorylase DeoD-type (237 aa).

A purine D-ribonucleoside is bound at residue His-4. Phosphate-binding positions include Gly-20, Arg-24, Arg-43, and 87–90; that span reads RVGT. A purine D-ribonucleoside contacts are provided by residues 179–181 and 203–204; these read EME and SD. Residue Asp-204 is the Proton donor of the active site.

Belongs to the PNP/UDP phosphorylase family. As to quaternary structure, homohexamer; trimer of homodimers.

It carries out the reaction a purine D-ribonucleoside + phosphate = a purine nucleobase + alpha-D-ribose 1-phosphate. It catalyses the reaction a purine 2'-deoxy-D-ribonucleoside + phosphate = a purine nucleobase + 2-deoxy-alpha-D-ribose 1-phosphate. In terms of biological role, catalyzes the reversible phosphorolytic breakdown of the N-glycosidic bond in the beta-(deoxy)ribonucleoside molecules, with the formation of the corresponding free purine bases and pentose-1-phosphate. This chain is Purine nucleoside phosphorylase DeoD-type, found in Clostridium beijerinckii (strain ATCC 51743 / NCIMB 8052) (Clostridium acetobutylicum).